Here is a 249-residue protein sequence, read N- to C-terminus: 1-(5-phosphoribosyl)-5-[(5-phosphoribosylamino)methylideneamino] imidazole-4-carboxamide isomerase (249 aa).

Asp-8 (proton acceptor) is an active-site residue. Asp-130 functions as the Proton donor in the catalytic mechanism.

It belongs to the HisA/HisF family.

Its subcellular location is the cytoplasm. It carries out the reaction 1-(5-phospho-beta-D-ribosyl)-5-[(5-phospho-beta-D-ribosylamino)methylideneamino]imidazole-4-carboxamide = 5-[(5-phospho-1-deoxy-D-ribulos-1-ylimino)methylamino]-1-(5-phospho-beta-D-ribosyl)imidazole-4-carboxamide. It participates in amino-acid biosynthesis; L-histidine biosynthesis; L-histidine from 5-phospho-alpha-D-ribose 1-diphosphate: step 4/9. This chain is 1-(5-phosphoribosyl)-5-[(5-phosphoribosylamino)methylideneamino] imidazole-4-carboxamide isomerase, found in Nitrosococcus oceani (strain ATCC 19707 / BCRC 17464 / JCM 30415 / NCIMB 11848 / C-107).